The chain runs to 200 residues: Imidazoleglycerol-phosphate dehydratase (200 aa).

It belongs to the imidazoleglycerol-phosphate dehydratase family.

The protein resides in the cytoplasm. It carries out the reaction D-erythro-1-(imidazol-4-yl)glycerol 3-phosphate = 3-(imidazol-4-yl)-2-oxopropyl phosphate + H2O. It participates in amino-acid biosynthesis; L-histidine biosynthesis; L-histidine from 5-phospho-alpha-D-ribose 1-diphosphate: step 6/9. In Renibacterium salmoninarum (strain ATCC 33209 / DSM 20767 / JCM 11484 / NBRC 15589 / NCIMB 2235), this protein is Imidazoleglycerol-phosphate dehydratase.